We begin with the raw amino-acid sequence, 515 residues long: MPTLRSATASASTAGTASPTAIATPRSAKRRLTSPRRAAGSPDASQFTSPHKSPNVGIVGTPKLLSASPRSSRKRLYGDFVAAEKPKWNPRGKSPESHFSRAQSSDWDLTKEFICSADPAQMQVVKEALHVATVPSCGLVCRDDEQSRVLEFCKGCVEQERSGSLYVCGCPGTGKTLSINKVKESVARWADETGMETPDALSINCTSLAKTHEIFSKILAKFQTRKKATCKLSPLQQLQTMFSHKESAPRRMLLVVVDEMDYLITRDRAVLHDLFMLTTYQFSRCILIGIANAIDLADRFLPKLESLNCKPLVVTFRAYSKDQISDIIKHRLKVLEYDVFEPLALEFCARKVAAASGDMRKALGVCRSAVEVFEARLQESSDQEFGLVTFDHMDIALSKAFKSPVVDSILCLPQHQQMVLCALANTFHHCKKKATTLGELNKSYIEICRSTQVPAVGMLEFSNMCMVLSDQGFMKLGQSKEDKLRRVMLQIDSSDITFAFKGNRFFQKCLEQQKF.

The span at 1–24 (MPTLRSATASASTAGTASPTAIAT) shows a compositional bias: low complexity. Residues 1-70 (MPTLRSATAS…TPKLLSASPR (70 aa)) form a disordered region. Polar residues predominate over residues 43-52 (DASQFTSPHK).

Belongs to the CDC6/cdc18 family.

It localises to the nucleus. Functionally, may be involved in the initiation of DNA replication. The chain is Cell division control protein 6 homolog from Oryza sativa subsp. japonica (Rice).